The following is a 192-amino-acid chain: Signal peptidase complex catalytic subunit sec11 (192 aa).

The Cytoplasmic portion of the chain corresponds to 1–18; the sequence is MLSFLSSNLSSTRQSMAQ. A helical; Signal-anchor for type II membrane protein membrane pass occupies residues 19-39; that stretch reads VLNFALVLSTAFMLWKGLSVF. Topologically, residues 40-192 are lumenal; the sequence is TASSSPIVVV…GLMVILQREQ (153 aa). Residues S53, H92, and D133 each act as charge relay system in the active site. Residues 177-188 are C-terminal short (CTS) helix; that stretch reads VLLGIMGLMVIL.

Belongs to the peptidase S26B family. In terms of assembly, component of the signal peptidase complex (SPC) composed of a catalytic subunit SEC11 and three accessory subunits SPC1, SPC2 and SPC3. The complex induces a local thinning of the ER membrane which is used to measure the length of the signal peptide (SP) h-region of protein substrates. This ensures the selectivity of the complex towards h-regions shorter than 18-20 amino acids. SPC associates with the translocon complex.

It is found in the endoplasmic reticulum membrane. It catalyses the reaction Cleavage of hydrophobic, N-terminal signal or leader sequences from secreted and periplasmic proteins.. In terms of biological role, catalytic component of the signal peptidase complex (SPC) which catalyzes the cleavage of N-terminal signal sequences from nascent proteins as they are translocated into the lumen of the endoplasmic reticulum. Specifically cleaves N-terminal signal peptides that contain a hydrophobic alpha-helix (h-region) shorter than 18-20 amino acids. This Aspergillus fumigatus (strain CBS 144.89 / FGSC A1163 / CEA10) (Neosartorya fumigata) protein is Signal peptidase complex catalytic subunit sec11 (sec11).